The following is a 95-amino-acid chain: Signal recognition particle 19 kDa protein (95 aa).

The protein belongs to the SRP19 family. Part of the signal recognition particle protein translocation system, which is composed of SRP and FtsY. Archaeal SRP consists of a 7S RNA molecule of 300 nucleotides and two protein subunits: SRP54 and SRP19.

Its subcellular location is the cytoplasm. Functionally, involved in targeting and insertion of nascent membrane proteins into the cytoplasmic membrane. Binds directly to 7S RNA and mediates binding of the 54 kDa subunit of the SRP. The polypeptide is Signal recognition particle 19 kDa protein (Staphylothermus marinus (strain ATCC 43588 / DSM 3639 / JCM 9404 / F1)).